We begin with the raw amino-acid sequence, 452 residues long: MRSEKEQRTGSRERGSVEIQFRDCQDNAAVNPKHKEEKKEIFSKVVIRRLPPSLSKDQLQEHLSPLPSFDYFEFFPADQSLYPHLFSRAYINFKNPEDIIIFRDRFDGYVFIDNKGQEYPAVVEFAPFQKVSKKKLKKKDAKAGTIEEDPEYRRFLENYSCDEEKSMANPETLLGEIEAKTRELIAKRTTPLLEYIKNKKLEKQRIREEKREERRRRELEKKRQREEEKRKRREEERQKRKEAEKQKKLSEKEIKIKLLKKCDRDDDVDSDRLKDKGDSGETEKNRWEKPGGHTKSKDSKDNRSQMENDKEQREGHGRRQRDKDHRGRDEERKRQRHHYEFDKFMRRKEETKWGKGYCQDRAKKDQHHGYSYCPETGDKLGKEDREDMGSRKERIRNKDRPAMQLYQPGARNRKRMGSGNKTFDFPPISPEHAGEHCYKTVIGTGSEKSADE.

Composition is skewed to basic and acidic residues over residues Arg205 to Lys363 and Thr376 to Pro401. Residues Arg205–Glu452 form a disordered region.

This sequence belongs to the RENT3 family.

It localises to the nucleus. It is found in the cytoplasm. Functionally, involved in nonsense-mediated decay (NMD) of mRNAs containing premature stop codons by associating with the nuclear exon junction complex (EJC) and serving as link between the EJC core and NMD machinery. Recruits UPF2 at the cytoplasmic side of the nuclear envelope and the subsequent formation of an UPF1-UPF2-UPF3 surveillance complex (including UPF1 bound to release factors at the stalled ribosome) is believed to activate NMD. Binds spliced mRNA upstream of exon-exon junctions. In Danio rerio (Zebrafish), this protein is Regulator of nonsense transcripts 3A.